Reading from the N-terminus, the 139-residue chain is D-ribose pyranase (139 aa).

H20 acts as the Proton donor in catalysis. Substrate contacts are provided by residues D28, H106, and 128-130; that span reads YAN.

This sequence belongs to the RbsD / FucU family. RbsD subfamily. As to quaternary structure, homodecamer.

The protein localises to the cytoplasm. It catalyses the reaction beta-D-ribopyranose = beta-D-ribofuranose. It functions in the pathway carbohydrate metabolism; D-ribose degradation; D-ribose 5-phosphate from beta-D-ribopyranose: step 1/2. In terms of biological role, catalyzes the interconversion of beta-pyran and beta-furan forms of D-ribose. This Pasteurella multocida (strain Pm70) protein is D-ribose pyranase.